A 206-amino-acid polypeptide reads, in one-letter code: A-type ATP synthase subunit E (206 aa).

It belongs to the V-ATPase E subunit family. In terms of assembly, has multiple subunits with at least A(3), B(3), C, D, E, F, H, I and proteolipid K(x).

The protein resides in the cell membrane. In terms of biological role, component of the A-type ATP synthase that produces ATP from ADP in the presence of a proton gradient across the membrane. The protein is A-type ATP synthase subunit E of Methanothermobacter thermautotrophicus (strain ATCC 29096 / DSM 1053 / JCM 10044 / NBRC 100330 / Delta H) (Methanobacterium thermoautotrophicum).